The following is a 137-amino-acid chain: MNATATQDRPIYWGTGRRKASIARVRLVPGSGKVVVNNRSGEDYFNRIPGYLAVLKSPLETLGLESEYDILVNAHGGGLTGQADAVKLGVARALCELDPDNRQPLKIEGYLTRDPRCKERKKYGLHKARKAPQFSKR.

This sequence belongs to the universal ribosomal protein uS9 family.

This is Small ribosomal subunit protein uS9 from Picosynechococcus sp. (strain ATCC 27264 / PCC 7002 / PR-6) (Agmenellum quadruplicatum).